The sequence spans 1172 residues: Serine/threonine-protein kinase Nek10 (1172 aa).

The stretch at 209–251 is one ARM repeat; it reads GAHKTLVNLLGARDTNVLLGSLLALASLAESQECREKISELNI. Residues 481–514 adopt a coiled-coil conformation; it reads YEELVSKLNLLVEDELKQIAENIESINQNKAPLK. The Protein kinase domain maps to 519–712; the sequence is YAILDHLGSG…SEPYGEKADV (194 aa). ATP is bound by residues 525 to 533 and K548; that span reads LGSGAFGCV. The active-site Proton acceptor is the D655. Disordered stretches follow at residues 855–875 and 898–954; these read SELS…YGKD and TYSE…GSRP. The segment covering 919-945 has biased composition (polar residues); the sequence is PLKESTFNILKRSFSASGGERQSQTRD.

This sequence belongs to the protein kinase superfamily. NEK Ser/Thr protein kinase family. NIMA subfamily. In terms of assembly, interacts with RAF1 and MAP2K1; the interaction is direct with RAF1 and required for ERK1/2-signaling pathway activation in response to UV irradiation. Mg(2+) serves as cofactor. As to expression, expressed in the lung.

The enzyme catalyses L-seryl-[protein] + ATP = O-phospho-L-seryl-[protein] + ADP + H(+). It catalyses the reaction L-threonyl-[protein] + ATP = O-phospho-L-threonyl-[protein] + ADP + H(+). Plays a role in the cellular response to UV irradiation. Mediates G2/M cell cycle arrest, MEK autoactivation and ERK1/2-signaling pathway activation in response to UV irradiation. In ciliated cells of airways, it is involved in the regulation of mucociliary transport. This Homo sapiens (Human) protein is Serine/threonine-protein kinase Nek10.